The following is a 397-amino-acid chain: Succinyl-diaminopimelate desuccinylase (397 aa).

A Zn(2+)-binding site is contributed by His-73. Residue Asp-75 is part of the active site. Asp-106 is a Zn(2+) binding site. Glu-140 acts as the Proton acceptor in catalysis. Zn(2+) contacts are provided by Glu-141, Glu-169, and His-366.

This sequence belongs to the peptidase M20A family. DapE subfamily. As to quaternary structure, homodimer. The cofactor is Zn(2+). Requires Co(2+) as cofactor.

It catalyses the reaction N-succinyl-(2S,6S)-2,6-diaminopimelate + H2O = (2S,6S)-2,6-diaminopimelate + succinate. It functions in the pathway amino-acid biosynthesis; L-lysine biosynthesis via DAP pathway; LL-2,6-diaminopimelate from (S)-tetrahydrodipicolinate (succinylase route): step 3/3. Catalyzes the hydrolysis of N-succinyl-L,L-diaminopimelic acid (SDAP), forming succinate and LL-2,6-diaminopimelate (DAP), an intermediate involved in the bacterial biosynthesis of lysine and meso-diaminopimelic acid, an essential component of bacterial cell walls. In Rhizobium etli (strain ATCC 51251 / DSM 11541 / JCM 21823 / NBRC 15573 / CFN 42), this protein is Succinyl-diaminopimelate desuccinylase.